The sequence spans 159 residues: Ribosomal RNA large subunit methyltransferase H (159 aa).

Residue Gly-108 coordinates S-adenosyl-L-methionine.

Belongs to the RNA methyltransferase RlmH family. In terms of assembly, homodimer.

It is found in the cytoplasm. It carries out the reaction pseudouridine(1915) in 23S rRNA + S-adenosyl-L-methionine = N(3)-methylpseudouridine(1915) in 23S rRNA + S-adenosyl-L-homocysteine + H(+). Its function is as follows. Specifically methylates the pseudouridine at position 1915 (m3Psi1915) in 23S rRNA. The chain is Ribosomal RNA large subunit methyltransferase H from Lactobacillus gasseri (strain ATCC 33323 / DSM 20243 / BCRC 14619 / CIP 102991 / JCM 1131 / KCTC 3163 / NCIMB 11718 / NCTC 13722 / AM63).